A 269-amino-acid chain; its full sequence is MSRLLTRFDELKQQNRAALVTFITAGDPDYATSLQILKGLPAAGADVIELGMPFTDPMADGPAIQLANIRALAAKQDLAKTLQMVREFRQDDQTTPIVLMGYFNPIHKMGVERFIAEAVEAGVDGLIVVDLPPEHNEDLCDPAQAAGIDFIRLTTPTTDDKRLPVVLNGSSGFVYYVSVAGVTGAGSATLEHVEEAVARLKRHTELPVCVGFGIRTPEQAAAIARLTEGVVVGSALIDQIANAKSNAQAVEGVLELCRQISTGVRSARA.

Catalysis depends on proton acceptor residues glutamate 49 and aspartate 60.

This sequence belongs to the TrpA family. As to quaternary structure, tetramer of two alpha and two beta chains.

The enzyme catalyses (1S,2R)-1-C-(indol-3-yl)glycerol 3-phosphate + L-serine = D-glyceraldehyde 3-phosphate + L-tryptophan + H2O. Its pathway is amino-acid biosynthesis; L-tryptophan biosynthesis; L-tryptophan from chorismate: step 5/5. Its function is as follows. The alpha subunit is responsible for the aldol cleavage of indoleglycerol phosphate to indole and glyceraldehyde 3-phosphate. This is Tryptophan synthase alpha chain from Stutzerimonas stutzeri (strain A1501) (Pseudomonas stutzeri).